Consider the following 70-residue polypeptide: Protein SlyX homolog (70 aa).

The protein belongs to the SlyX family.

The polypeptide is Protein SlyX homolog (Shewanella oneidensis (strain ATCC 700550 / JCM 31522 / CIP 106686 / LMG 19005 / NCIMB 14063 / MR-1)).